Consider the following 242-residue polypeptide: Phosphomannomutase 2 (242 aa).

Catalysis depends on D8, which acts as the Nucleophile. The Mg(2+) site is built by D8 and D10. D10 acts as the Proton donor/acceptor in catalysis. Alpha-D-mannose 1-phosphate contacts are provided by R17, R119, R130, and R137. An N6-acetyllysine modification is found at K145. S175 and D177 together coordinate alpha-D-mannose 1-phosphate. Residues D205, F217, D219, and T222 each coordinate Mg(2+).

Belongs to the eukaryotic PMM family. In terms of assembly, homodimer.

The protein localises to the cytoplasm. It catalyses the reaction alpha-D-mannose 1-phosphate = D-mannose 6-phosphate. It participates in nucleotide-sugar biosynthesis; GDP-alpha-D-mannose biosynthesis; alpha-D-mannose 1-phosphate from D-fructose 6-phosphate: step 2/2. Its function is as follows. Involved in the synthesis of the GDP-mannose and dolichol-phosphate-mannose required for a number of critical mannosyl transfer reactions. In Mus musculus (Mouse), this protein is Phosphomannomutase 2 (Pmm2).